A 67-amino-acid polypeptide reads, in one-letter code: Prokaryotic ubiquitin-like protein Pup (67 aa).

Residues 1-26 (MATKETGGQKHATRRNQEVEEIEVTT) are disordered. The ARC ATPase binding stretch occupies residues 23–61 (EVTTETSVRNEKLAEDVDDILDEIDEVLESNAEDFVRQF). The stretch at 27 to 55 (ETSVRNEKLAEDVDDILDEIDEVLESNAE) forms a coiled coil. Residue E67 forms an Isoglutamyl lysine isopeptide (Glu-Lys) (interchain with K-? in acceptor proteins) linkage.

It belongs to the prokaryotic ubiquitin-like protein family. In terms of assembly, strongly interacts with the proteasome-associated ATPase ARC through a hydrophobic interface; the interacting region of Pup lies in its C-terminal half. There is one Pup binding site per ARC hexamer ring.

The protein operates within protein degradation; proteasomal Pup-dependent pathway. In terms of biological role, protein modifier that is covalently attached to lysine residues of substrate proteins, thereby targeting them for proteasomal degradation. The tagging system is termed pupylation. The chain is Prokaryotic ubiquitin-like protein Pup from Thermobifida fusca (strain YX).